A 329-amino-acid chain; its full sequence is Sulfate/thiosulfate import ATP-binding protein CysA (329 aa).

Residues 3–237 (IEVRNVSKRF…PANDFVYHFL (235 aa)) form the ABC transporter domain. Residue 35–42 (GPSGCGKT) coordinates ATP.

This sequence belongs to the ABC transporter superfamily. Sulfate/tungstate importer (TC 3.A.1.6) family. As to quaternary structure, the complex is composed of two ATP-binding proteins (CysA), two transmembrane proteins (CysT and CysW) and a solute-binding protein (CysP).

The protein resides in the cell inner membrane. It catalyses the reaction sulfate(out) + ATP + H2O = sulfate(in) + ADP + phosphate + H(+). It carries out the reaction thiosulfate(out) + ATP + H2O = thiosulfate(in) + ADP + phosphate + H(+). Its function is as follows. Part of the ABC transporter complex CysAWTP involved in sulfate/thiosulfate import. Responsible for energy coupling to the transport system. The sequence is that of Sulfate/thiosulfate import ATP-binding protein CysA from Pseudomonas putida (strain ATCC 47054 / DSM 6125 / CFBP 8728 / NCIMB 11950 / KT2440).